Here is a 302-residue protein sequence, read N- to C-terminus: Probable 5-dehydro-4-deoxyglucarate dehydratase (302 aa).

The protein belongs to the DapA family.

It catalyses the reaction 5-dehydro-4-deoxy-D-glucarate + H(+) = 2,5-dioxopentanoate + CO2 + H2O. The protein operates within carbohydrate acid metabolism; D-glucarate degradation; 2,5-dioxopentanoate from D-glucarate: step 2/2. This is Probable 5-dehydro-4-deoxyglucarate dehydratase from Rhizobium rhizogenes (strain K84 / ATCC BAA-868) (Agrobacterium radiobacter).